Consider the following 157-residue polypeptide: Protein E6 (157 aa).

Zinc fingers lie at residues 41 to 77 (CNFC…CRVC) and 114 to 150 (CQTC…CRQC).

It belongs to the papillomaviridae E6 protein family. In terms of assembly, forms homodimers. Interacts with ubiquitin-protein ligase UBE3A/E6-AP; this interaction stimulates UBE3A ubiquitin activity. Interacts with host BAK1.

The protein resides in the host cytoplasm. The protein localises to the host nucleus. In terms of biological role, plays a major role in the induction and maintenance of cellular transformation. E6 associates with host UBE3A/E6-AP ubiquitin-protein ligase and modulates its activity. Protects host keratinocytes from apoptosis by mediating the degradation of host BAK1. May also inhibit host immune response. The protein is Protein E6 of Human papillomavirus type 5b.